The following is a 260-amino-acid chain: DNA-binding protein RFXANK (260 aa).

Residues 1–79 are disordered; that stretch reads MELTQPAEDL…STTLTNRQRG (79 aa). Over residues 22 to 33 the composition is skewed to acidic residues; that stretch reads GDPEDPGEEAAD. Polar residues predominate over residues 57-77; the sequence is SVSSPQAGSSLKHSTTLTNRQ. 5 ANK repeats span residues 89–118, 123–152, 156–185, 189–218, and 222–251; these read LDSL…NLVN, RGFT…DPHI, ERES…DINI, NGGT…DLTT, and SGYT…KLFQ.

As to quaternary structure, forms homodimers. The RFX heterotetrameric complex consists of 2 molecules of RFX5 and one each of RFXAP and RFX-B/RFXANK; with each subunit representing a separate complementation group. Interacts (via ankyrin repeats) with RFX5 (via PxLPxI/L motif); the interaction is direct. RFX forms cooperative DNA binding complexes with X2BP and CBF/NF-Y. RFX associates with CIITA to form an active transcriptional complex. Interacts with RAF1. Interacts (via ankyrin repeats) with RFX7 (via PxLPxI/L motif). Phosphorylated by RAF1. As to expression, ubiquitous.

It is found in the cytoplasm. Its subcellular location is the nucleus. Its function is as follows. Activates transcription from class II MHC promoters. Activation requires the activity of the MHC class II transactivator/CIITA. May regulate other genes in the cell. RFX binds the X1 box of MHC-II promoters. May also potentiate the activation of RAF1. Isoform 2 is not involved in the positive regulation of MHC class II genes. The sequence is that of DNA-binding protein RFXANK (RFXANK) from Homo sapiens (Human).